Reading from the N-terminus, the 291-residue chain is ATP synthase gamma chain (291 aa).

This sequence belongs to the ATPase gamma chain family. As to quaternary structure, F-type ATPases have 2 components, CF(1) - the catalytic core - and CF(0) - the membrane proton channel. CF(1) has five subunits: alpha(3), beta(3), gamma(1), delta(1), epsilon(1). CF(0) has three main subunits: a, b and c.

The protein resides in the cell inner membrane. Its function is as follows. Produces ATP from ADP in the presence of a proton gradient across the membrane. The gamma chain is believed to be important in regulating ATPase activity and the flow of protons through the CF(0) complex. This Chlorobium limicola (strain DSM 245 / NBRC 103803 / 6330) protein is ATP synthase gamma chain.